The following is a 426-amino-acid chain: UPF0164 protein TP_0548 (426 aa).

The signal sequence occupies residues 1–37; sequence MISCSVRRRPRWEPQVGAAFLAFALLPVLASGRGMQA.

It belongs to the UPF0164 family.

This Treponema pallidum (strain Nichols) protein is UPF0164 protein TP_0548.